The sequence spans 451 residues: Interferon-related developmental regulator 1 (451 aa).

The segment covering 1–10 has biased composition (basic residues); the sequence is MPKNKKRNTP. Positions 1–69 are disordered; the sequence is MPKNKKRNTP…PSSFAEDGPE (69 aa). Residues 23-33 show a composition bias toward low complexity; that stretch reads AAAATAATAGG. The segment covering 49-61 has biased composition (polar residues); sequence ETMSHCSGYSDPS.

This sequence belongs to the IFRD family. As to quaternary structure, interacts with PSIP1/LEDGF. As to expression, expressed in a variety of tissues.

In terms of biological role, could play a role in regulating gene activity in the proliferative and/or differentiative pathways induced by NGF. May be an autocrine factor that attenuates or amplifies the initial ligand-induced signal. The protein is Interferon-related developmental regulator 1 (IFRD1) of Homo sapiens (Human).